A 729-amino-acid polypeptide reads, in one-letter code: MKKLVAQSVIDAFFDGTHSDPFAVLGMHETHNGIEIRVLLPEAHRVIVIDKETHKAVVELELVDERGFFNAIVPKANQFFAYELQVYWGKESQILEDPYRFHPMINELDNWLLAEGSHLRPYEVLGAHFVEYDNVAGVNFRVWAPNAKRVSVVGDFNYWDGRRHPMRFHPASGIWELFLPKVALGQLYKFELIDSNNQLRLKADPYAFAAQLRPDTASQVSALPEIVEMTEKRRAANQSDKPISIYEVHLGSWRRNLENNFWLDYDEIADELIPYVKEMGFTHIELLPISEYPFDGSWGYQPLGLYAPTSRFGTPDGFKRLIEKAHESGINVILDWVPGHFPSDTHGLAAFDGTSLYEYADPKEGYHQDWNTLIYNYGRHEVKNYLSGNALYWVERFGLDGLRVDAVASMIYRDYSRRDGEWVPNQYGGRENLEAIEFLKHTNYVLGTELPGVAAIAEESTSFPGVTLPPEHGGLGFHYKWNMGWMNDTLEYMKLDPVYRQYHHGKMTFAMLYQYSENFVLPLSHDEVVHGKGSLITKMSGDTWQKFANLRAYYGYMWAFPGKKLLFMGNEFAQGREWNYQESLDWFLLDDGQGGGWHSGVQRLVKDLNKTYQNQTALFELDTNPQGFEWLVVDDNQNSVFAFERRSKSGEVIIVVSNFTPVPRDNYRIGVNEPGKYEEILNTDSAYYKGSNLGNYGEVIAEEIENHGKAQSISVMVPPLATVYLRLKK.

Asp405 serves as the catalytic Nucleophile. Catalysis depends on Glu458, which acts as the Proton donor.

Belongs to the glycosyl hydrolase 13 family. GlgB subfamily. As to quaternary structure, monomer.

The catalysed reaction is Transfers a segment of a (1-&gt;4)-alpha-D-glucan chain to a primary hydroxy group in a similar glucan chain.. It participates in glycan biosynthesis; glycogen biosynthesis. Its function is as follows. Catalyzes the formation of the alpha-1,6-glucosidic linkages in glycogen by scission of a 1,4-alpha-linked oligosaccharide from growing alpha-1,4-glucan chains and the subsequent attachment of the oligosaccharide to the alpha-1,6 position. In Mannheimia succiniciproducens (strain KCTC 0769BP / MBEL55E), this protein is 1,4-alpha-glucan branching enzyme GlgB.